A 177-amino-acid polypeptide reads, in one-letter code: Interleukin-1 receptor antagonist protein (177 aa).

A signal peptide spans 1–25 (MEVSRYLCSYLISFLLFLFHSETAC). The cysteines at positions 91 and 141 are disulfide-linked. N109 carries N-linked (GlcNAc...) asparagine glycosylation.

The protein belongs to the IL-1 family.

The protein localises to the secreted. Anti-inflammatory antagonist of interleukin-1 family of proinflammatory cytokines such as interleukin-1beta/IL1B and interleukin-1alpha/IL1A. Protects from immune dysregulation and uncontrolled systemic inflammation triggered by IL1 for a range of innate stimulatory agents such as pathogens. In Sus scrofa (Pig), this protein is Interleukin-1 receptor antagonist protein (IL1RN).